The chain runs to 85 residues: MADTGKGSASASCNDRCGCPSPCPGGESCRCKMMSEASGGDQEHNTCPCGEHCGCNPCNCPKTQTQTSAKGCTCGEGCTCATCAA.

The interval 1–20 (MADTGKGSASASCNDRCGCP) is disordered.

This sequence belongs to the metallothionein superfamily. Type 15 family. As to expression, expressed specifically in seeds.

The protein localises to the cytoplasm. The protein resides in the nucleus. It is found in the cell membrane. In terms of biological role, metallothioneins have a high content of cysteine residues that bind various heavy metals. Functions as a metal chelator of copper (Cu) and zinc (Zn). Plays a role in storing and distributing Zn ion in seed. The protein is Metallothionein-like protein 4B (MT4B) of Arabidopsis thaliana (Mouse-ear cress).